The following is a 218-amino-acid chain: uncharacterized protein (218 aa).

This is an uncharacterized protein from Caenorhabditis elegans.